Here is a 122-residue protein sequence, read N- to C-terminus: WUSCHEL-related homeobox 7 (122 aa).

The segment at residues 25–89 is a DNA-binding region (homeobox; WUS-type); that stretch reads AKCGRWNPTV…NHKARERQKC (65 aa). Basic and acidic residues predominate over residues 98-111; it reads DHRQDTDLSKPRRD. Residues 98–122 form a disordered region; the sequence is DHRQDTDLSKPRRDNVRRHQLPAKG. Basic residues predominate over residues 112-122; the sequence is NVRRHQLPAKG.

This sequence belongs to the WUS homeobox family.

It is found in the nucleus. Functionally, potential transcription factor that plays a central role during developmental processes. The sequence is that of WUSCHEL-related homeobox 7 (WOX7) from Arabidopsis thaliana (Mouse-ear cress).